The sequence spans 914 residues: Probable dipeptidyl-aminopeptidase B (914 aa).

Residues 1–10 are compositionally biased toward acidic residues; sequence MGKSEADEDA. Residues 1 to 81 form a disordered region; the sequence is MGKSEADEDA…DQPFLPSRKG (81 aa). Over 1-89 the chain is Cytoplasmic; that stretch reads MGKSEADEDA…KGSGARARRV (89 aa). Low complexity predominate over residues 20–34; the sequence is SSSAASQTSSDSGLS. A helical; Signal-anchor for type II membrane protein membrane pass occupies residues 90–110; that stretch reads FWGLLLLCLAGWVLAFVLFLI. At 111-914 the chain is on the vacuolar side; sequence QGRSGYSATS…FKRALPVFVH (804 aa). N-linked (GlcNAc...) asparagine glycosylation is found at N347 and N638. S752 (charge relay system) is an active-site residue. An N-linked (GlcNAc...) asparagine glycan is attached at N806. Active-site charge relay system residues include D829 and H862.

It belongs to the peptidase S9B family.

The protein localises to the vacuole membrane. It catalyses the reaction Release of an N-terminal dipeptide, Xaa-Yaa-|-Zaa-, from a polypeptide, preferentially when Yaa is Pro, provided Zaa is neither Pro nor hydroxyproline.. Type IV dipeptidyl-peptidase which removes N-terminal dipeptides sequentially from polypeptides having unsubstituted N-termini provided that the penultimate residue is proline. In Aspergillus terreus (strain NIH 2624 / FGSC A1156), this protein is Probable dipeptidyl-aminopeptidase B (dapB).